The primary structure comprises 382 residues: Anhydro-N-acetylmuramic acid kinase (382 aa).

Residue 9-16 participates in ATP binding; sequence GTSLDGID.

Belongs to the anhydro-N-acetylmuramic acid kinase family.

It catalyses the reaction 1,6-anhydro-N-acetyl-beta-muramate + ATP + H2O = N-acetyl-D-muramate 6-phosphate + ADP + H(+). The protein operates within amino-sugar metabolism; 1,6-anhydro-N-acetylmuramate degradation. It participates in cell wall biogenesis; peptidoglycan recycling. Functionally, catalyzes the specific phosphorylation of 1,6-anhydro-N-acetylmuramic acid (anhMurNAc) with the simultaneous cleavage of the 1,6-anhydro ring, generating MurNAc-6-P. Is required for the utilization of anhMurNAc either imported from the medium or derived from its own cell wall murein, and thus plays a role in cell wall recycling. The sequence is that of Anhydro-N-acetylmuramic acid kinase from Bacillus cereus (strain Q1).